The following is a 168-amino-acid chain: Plastocyanin, chloroplastic (168 aa).

Residues 70–168 (VEVLLGGGDG…AGMVGKVTVN (99 aa)) enclose the Plastocyanin-like domain. 4 residues coordinate Cu cation: His-106, Cys-153, His-156, and Met-161.

The protein belongs to the plastocyanin family. The cofactor is Cu(2+).

The protein localises to the plastid. It localises to the chloroplast thylakoid membrane. Functionally, participates in electron transfer between P700 and the cytochrome b6-f complex in photosystem I. The chain is Plastocyanin, chloroplastic (PETE) from Spinacia oleracea (Spinach).